The sequence spans 155 residues: Microsomal glutathione S-transferase 1 (155 aa).

The Lumenal portion of the chain corresponds to 3–9 (DLRQLMD). A helical membrane pass occupies residues 10–33 (NEVLMAFTSYATIILTKMMFMSSA). Topologically, residues 34 to 62 (TAFQRITNKVFANPEDCAGFGKGENAKKF) are cytoplasmic. Arginine 38 lines the glutathione pocket. N6-acetyllysine is present on residues lysine 42, lysine 55, and lysine 60. The helical transmembrane segment at 63–96 (VRTDEKVERVRRAHLNDLENIVPFLGIGLLYSLS) threads the bilayer. Glutathione is bound by residues arginine 73, arginine 74, histidine 76, and glutamate 81. Residues 97–99 (GPD) lie on the Lumenal side of the membrane. The helical transmembrane segment at 100–123 (LSTALMHFRIFVGARIYHTIAYLT) threads the bilayer. Residue tyrosine 121 coordinates glutathione. Topologically, residues 124–128 (PLPQP) are cytoplasmic. The helical transmembrane segment at 129 to 148 (NRGLAFFVGYGVTLSMAYRL) threads the bilayer. The Lumenal segment spans residues 149 to 155 (LRSRLYL).

It belongs to the MAPEG family. In terms of assembly, homotrimer; The trimer binds only one molecule of glutathione. Acetylation of Lys-42 and Lys-55 is observed in liver mitochondria from fasted mice but not from fed mice. Expressed in the testes (at protein level).

It is found in the endoplasmic reticulum membrane. The protein localises to the mitochondrion outer membrane. It carries out the reaction RX + glutathione = an S-substituted glutathione + a halide anion + H(+). Functionally, conjugation of reduced glutathione to a wide number of exogenous and endogenous hydrophobic electrophiles. The chain is Microsomal glutathione S-transferase 1 (Mgst1) from Mus musculus (Mouse).